Reading from the N-terminus, the 708-residue chain is MLRMRVPALLVLLFCFRGRAGPSPHFLQQPEDLVVLLGEEARLPCALGAYWGLVQWTKSGLALGGQRDLPGWSRYWISGNAANGQHDLHIRPVELEDEASYECQATQAGLRSRPAQLHVLVPPEAPQVLGGPSVSLVAGVPANLTCRSRGDARPTPELLWFRDGVLLDGATFHQTLLKEGTPGSVESTLTLTPFSHDDGATFVCRARSQALPTGRDTAITLSLQYPPEVTLSASPHTVQEGEKVIFLCQATAQPPVTGYRWAKGGSPVLGARGPRLEVVADASFLTEPVSCEVSNAVGSANRSTALDVLFGPILQAKPEPVSVDVGEDASFSCAWRGNPLPRVTWTRRGGAQVLGSGATLRLPSVGPEDAGDYVCRAEAGLSGLRGGAAEARLTVNAPPVVTALHSAPAFLRGPARLQCLVFASPAPDAVVWSWDEGFLEAGSQGRFLVETFPAPESRGGLGPGLISVLHISGTQESDFSRSFNCSARNRLGEGGAQASLGRRDLLPTVRIVAGVAAATTTLLMVITGVALCCWRHSKASASFSEQKNLMRIPGSSDGSSSRGPEEEETGSREDRGPIVHTDHSDLVLEEEGTLETKDPTNGYYKVRGVSVSLSLGEAPGGGLFLPPPSPLGPPGTPTFYDFNPHLGMVPPCRLYRARAGYLTTPHPRAFTSYIKPTSFGPPDLAPGTPPFPYAAFPTPSHPRLQTHV.

Positions Met-1 to Ala-20 are cleaved as a signal peptide. At Gly-21 to Arg-510 the chain is on the extracellular side. Ig-like C2-type domains lie at Pro-24–His-118, Pro-123–Ser-222, Pro-227–Asp-307, Pro-312–Thr-394, and Pro-398–Gly-501. A disulfide bridge links Cys-45 with Cys-103. Asn-143 is a glycosylation site (N-linked (GlcNAc...) asparagine). Intrachain disulfides connect Cys-146–Cys-204 and Cys-248–Cys-291. A Cell attachment site motif is present at residues Arg-149–Asp-151. Residue Asn-301 is glycosylated (N-linked (GlcNAc...) asparagine). 2 cysteine pairs are disulfide-bonded: Cys-333–Cys-375 and Cys-419–Cys-485. Residue Asn-484 is glycosylated (N-linked (GlcNAc...) asparagine). Residues Ile-511–Leu-531 traverse the membrane as a helical segment. The Cytoplasmic portion of the chain corresponds to Cys-532 to Val-708. Residues Glu-545–Asn-601 form a disordered region. The span at Pro-553 to Arg-562 shows a compositional bias: low complexity. Positions Thr-569 to Leu-586 are enriched in basic and acidic residues. A Phosphoserine modification is found at Ser-571. A phosphotyrosine mark is found at Tyr-603, Tyr-604, and Tyr-661. Residues Leu-684–Val-708 are disordered.

This sequence belongs to the immunoglobulin superfamily. As to quaternary structure, homodimer. Interacts with NPHS2/podocin (via the C-terminus). Interacts with NPHS1 (via the Ig-like domains). Interacts with FYN. Post-translationally, N-glycosylated. In terms of processing, the extracellular domain is cleaved leading to the generation of a soluble fragment and a membrane-bound C-terminal fragment, which is further cleaved by gamma-secretase. As to expression, highly expressed in beta-cells of the pancreatic islets.

The protein localises to the cell membrane. May regulate basal insulin secretion. This is Kin of IRRE-like protein 2 (KIRREL2) from Homo sapiens (Human).